We begin with the raw amino-acid sequence, 750 residues long: Photosystem I P700 chlorophyll a apoprotein A1 (750 aa).

Helical transmembrane passes span 70–93 (VFSAHFGQLSIIFLWLSGMYFHGA), 156–179 (LYCTAIGALVFSALMLFAGWFHYH), 195–219 (LNHHLAGLLGLGSLSWAGHQVHVSL), 291–309 (IAHHHLAIAILFLIAGHMY), 346–369 (WHAQLSLNLAMLGSLTIVVAHHMY), 385–411 (LSLFTHHMWIGGFLIVGAAAHAAIFMV), 433–455 (AIISHLNWVCIFLGFHSFGLYIH), and 531–549 (FLVHHIHAFTIHVTVLILL). Cys573 and Cys582 together coordinate [4Fe-4S] cluster. Helical transmembrane passes span 589 to 610 (HVFLGLFWMYNAISVVIFHFSW) and 664 to 686 (LSAYGLFFLGAHFVWAFSLMFLF). His675 is a binding site for chlorophyll a'. Residues Met683 and Tyr691 each contribute to the chlorophyll a site. Trp692 contacts phylloquinone. Residues 724 to 744 (AVGVTHYLLGGIATTWAFFLA) traverse the membrane as a helical segment.

Belongs to the PsaA/PsaB family. The PsaA/B heterodimer binds the P700 chlorophyll special pair and subsequent electron acceptors. PSI consists of a core antenna complex that captures photons, and an electron transfer chain that converts photonic excitation into a charge separation. The eukaryotic PSI reaction center is composed of at least 11 subunits. It depends on P700 is a chlorophyll a/chlorophyll a' dimer, A0 is one or more chlorophyll a, A1 is one or both phylloquinones and FX is a shared 4Fe-4S iron-sulfur center. as a cofactor.

The protein resides in the plastid. The protein localises to the chloroplast thylakoid membrane. It catalyses the reaction reduced [plastocyanin] + hnu + oxidized [2Fe-2S]-[ferredoxin] = oxidized [plastocyanin] + reduced [2Fe-2S]-[ferredoxin]. Its function is as follows. PsaA and PsaB bind P700, the primary electron donor of photosystem I (PSI), as well as the electron acceptors A0, A1 and FX. PSI is a plastocyanin-ferredoxin oxidoreductase, converting photonic excitation into a charge separation, which transfers an electron from the donor P700 chlorophyll pair to the spectroscopically characterized acceptors A0, A1, FX, FA and FB in turn. Oxidized P700 is reduced on the lumenal side of the thylakoid membrane by plastocyanin. The polypeptide is Photosystem I P700 chlorophyll a apoprotein A1 (Lepidium virginicum (Virginia pepperweed)).